The sequence spans 354 residues: Acyl-CoA-binding domain-containing protein 2 (354 aa).

A helical; Signal-anchor membrane pass occupies residues 11–31 (VILGLIFSYLLAKLISIVVTF). The segment at 75–96 (AEQGSSRSDSVAGDDSEEDDDW) is disordered. Residues 86–96 (AGDDSEEDDDW) show a composition bias toward acidic residues. The region spanning 104 to 194 (LDEAFSAATL…VTQLYPTWLD (91 aa)) is the ACB domain. An acyl-CoA-binding positions include 136-140 (YGLYK), Lys162, and Tyr181. ANK repeat units follow at residues 265–294 (EGRT…DVNA) and 298–327 (EGQT…NTAA).

It belongs to the ACBP family. In terms of assembly, interacts (via ankyrin repeats) with HIPP26 and the ethylene-responsive element-binding proteins RAP2-3/EBP and RAP2-12. Interacts with CSE. In terms of tissue distribution, mostly expressed in roots and flowers, and, to a lower extent, in stems, pods and leaves (at protein level).

It is found in the cell membrane. Its subcellular location is the endoplasmic reticulum membrane. The protein resides in the peroxisome membrane. In terms of biological role, binds medium- and long-chain acyl-CoA esters with very high affinity. Can interact in vitro with palmitoyl-CoA, but not with oleoyl-CoA. Binds to lead ions (Pb). May function as an intracellular carrier of acyl-CoA esters. Required for proper phospholipid and, to a lower extent, galactolipid composition. The protein is Acyl-CoA-binding domain-containing protein 2 (ACBP2) of Arabidopsis thaliana (Mouse-ear cress).